Here is an 88-residue protein sequence, read N- to C-terminus: Small ribosomal subunit protein bS20 (88 aa).

Residues 1 to 27 form a disordered region; the sequence is MANSKTAKKRAIQSEKRRQHNASRRSM.

The protein belongs to the bacterial ribosomal protein bS20 family.

Functionally, binds directly to 16S ribosomal RNA. This is Small ribosomal subunit protein bS20 from Shewanella amazonensis (strain ATCC BAA-1098 / SB2B).